Here is a 412-residue protein sequence, read N- to C-terminus: Pyruvate dehydrogenase E1 component subunit alpha, mitochondrial (412 aa).

Pyruvate is bound by residues His104, Tyr130, Arg131, Ala169, Gly177, Val179, Asp208, Gly209, Ala210, Asn237, and Tyr239. Thiamine diphosphate-binding residues include Tyr130 and Arg131. The thiamine diphosphate site is built by Gly177, Val179, Asp208, Gly209, Ala210, and Asn237. Asp208 lines the Mg(2+) pocket. Residues Asn237 and Tyr239 each contribute to the Mg(2+) site. His304 lines the thiamine diphosphate pocket.

As to quaternary structure, tetramer of 2 alpha and 2 beta subunits. Thiamine diphosphate is required as a cofactor. Requires Mg(2+) as cofactor.

It is found in the mitochondrion matrix. The catalysed reaction is N(6)-[(R)-lipoyl]-L-lysyl-[protein] + pyruvate + H(+) = N(6)-[(R)-S(8)-acetyldihydrolipoyl]-L-lysyl-[protein] + CO2. E1 activity is regulated by phosphorylation (inactivation) and dephosphorylation (activation) of the alpha subunit. Its function is as follows. The pyruvate dehydrogenase complex catalyzes the overall conversion of pyruvate to acetyl-CoA and CO(2). It contains multiple copies of three enzymatic components: pyruvate dehydrogenase (E1), dihydrolipoamide acetyltransferase (E2) and lipoamide dehydrogenase (E3). This is Pyruvate dehydrogenase E1 component subunit alpha, mitochondrial (PDA1) from Kluyveromyces lactis (strain ATCC 8585 / CBS 2359 / DSM 70799 / NBRC 1267 / NRRL Y-1140 / WM37) (Yeast).